The primary structure comprises 118 residues: NADH-quinone oxidoreductase subunit A (118 aa).

3 helical membrane passes run Phe5–Met25, Phe61–Ala81, and Phe90–Trp110.

Belongs to the complex I subunit 3 family. As to quaternary structure, NDH-1 is composed of 14 different subunits. Subunits NuoA, H, J, K, L, M, N constitute the membrane sector of the complex.

The protein localises to the cell membrane. The enzyme catalyses a quinone + NADH + 5 H(+)(in) = a quinol + NAD(+) + 4 H(+)(out). Functionally, NDH-1 shuttles electrons from NADH, via FMN and iron-sulfur (Fe-S) centers, to quinones in the respiratory chain. The immediate electron acceptor for the enzyme in this species is believed to be a menaquinone. Couples the redox reaction to proton translocation (for every two electrons transferred, four hydrogen ions are translocated across the cytoplasmic membrane), and thus conserves the redox energy in a proton gradient. The protein is NADH-quinone oxidoreductase subunit A of Desulfitobacterium hafniense (strain Y51).